The following is a 398-amino-acid chain: Dihydrolipoyllysine-residue succinyltransferase component of 2-oxoglutarate dehydrogenase complex (398 aa).

Residues 2–77 enclose the Lipoyl-binding domain; the sequence is SIKIIIPSLG…TVGEEVGEIN (76 aa). The residue at position 43 (Lys-43) is an N6-lipoyllysine. The Peripheral subunit-binding (PSBD) domain occupies 112-149; the sequence is ILAPSVQKLVTENKLDPNNIKGTGRGGRITKYDVLETI. Active-site residues include His-369 and Asp-373.

It belongs to the 2-oxoacid dehydrogenase family. In terms of assembly, forms a 24-polypeptide structural core with octahedral symmetry. Part of the 2-oxoglutarate dehydrogenase (OGDH) complex composed of E1 (2-oxoglutarate dehydrogenase), E2 (dihydrolipoamide succinyltransferase) and E3 (dihydrolipoamide dehydrogenase); the complex contains multiple copies of the three enzymatic components (E1, E2 and E3). It depends on (R)-lipoate as a cofactor.

The catalysed reaction is N(6)-[(R)-dihydrolipoyl]-L-lysyl-[protein] + succinyl-CoA = N(6)-[(R)-S(8)-succinyldihydrolipoyl]-L-lysyl-[protein] + CoA. Its pathway is amino-acid degradation; L-lysine degradation via saccharopine pathway; glutaryl-CoA from L-lysine: step 6/6. E2 component of the 2-oxoglutarate dehydrogenase (OGDH) complex which catalyzes the second step in the conversion of 2-oxoglutarate to succinyl-CoA and CO(2). In Rickettsia typhi (strain ATCC VR-144 / Wilmington), this protein is Dihydrolipoyllysine-residue succinyltransferase component of 2-oxoglutarate dehydrogenase complex (sucB).